We begin with the raw amino-acid sequence, 871 residues long: DNA mismatch repair protein MutS (871 aa).

Residue 618-625 (GPNMSGKS) coordinates ATP.

It belongs to the DNA mismatch repair MutS family.

Its function is as follows. This protein is involved in the repair of mismatches in DNA. It is possible that it carries out the mismatch recognition step. This protein has a weak ATPase activity. This Christiangramia forsetii (strain DSM 17595 / CGMCC 1.15422 / KT0803) (Gramella forsetii) protein is DNA mismatch repair protein MutS.